The following is a 265-amino-acid chain: Mlc titration factor A (265 aa).

4 residues coordinate Zn(2+): H111, H148, H152, and E211.

This sequence belongs to the MtfA family. As to quaternary structure, monomer in solution. Interacts with Mlc. Zn(2+) serves as cofactor.

The protein resides in the cytoplasm. With respect to regulation, association between Mlc and MtfA may induce structural changes that activate the peptidase activity of MtfA while inactivating the DNA-binding ability of Mlc. The aminopeptidase activity is partially inhibited by metal chelators such as EDTA and phenantroline, but not by inhibitors for serine-, aspartyl-, or cysteine-proteases. Involved in the modulation of the activity of the glucose-phosphotransferase system (glucose-PTS). Interacts with the transcriptional repressor Mlc, preventing its interaction with DNA and leading to the modulation of expression of genes regulated by Mlc, including ptsG, which encodes the PTS system glucose-specific EIICB component. In terms of biological role, shows zinc-dependent metallopeptidase activity. In vitro, can cleave several artificial substrates. The highest activity is observed for L-alanine fused to 4-nitroanilide (L-alanine-pNA). Shows lower activity towards proline-pNA and valine-pNA. The sequence is that of Mlc titration factor A from Klebsiella pneumoniae subsp. pneumoniae (strain ATCC 700721 / MGH 78578).